The sequence spans 686 residues: LEAF RUST 10 DISEASE-RESISTANCE LOCUS RECEPTOR-LIKE PROTEIN KINASE-like 1.3 (686 aa).

A signal peptide spans 1-33 (MFSPVLFRFSKPNSFLVLLFFLSYIHFLPCAQS). The Extracellular segment spans residues 34–264 (QREPCDTLFR…AGLSKKGKIG (231 aa)). 5 N-linked (GlcNAc...) asparagine glycosylation sites follow: asparagine 76, asparagine 93, asparagine 175, asparagine 190, and asparagine 236. A helical membrane pass occupies residues 265 to 285 (IGFASGFLGATLIGGCLLCIF). The Cytoplasmic segment spans residues 286 to 686 (IRRRKKLATQ…SSSNTTASSF (401 aa)). One can recognise a Protein kinase domain in the interval 358 to 633 (ENFSKELGDG…DEIVEVLRVI (276 aa)). Residues 364–372 (LGDGGFGTV) and lysine 386 contribute to the ATP site. Tyrosine 432 is modified (phosphotyrosine). The Proton acceptor role is filled by aspartate 482. Serine 515 carries the phosphoserine modification. Phosphothreonine is present on residues threonine 516 and threonine 521. Tyrosine 529 is subject to Phosphotyrosine. The interval 657–686 (GLLKHGVPPPLSPETDKTTASSSNTTASSF) is disordered. The segment covering 674-686 (TTASSSNTTASSF) has biased composition (low complexity).

The protein belongs to the protein kinase superfamily. Ser/Thr protein kinase family.

It localises to the cell membrane. The enzyme catalyses L-seryl-[protein] + ATP = O-phospho-L-seryl-[protein] + ADP + H(+). The catalysed reaction is L-threonyl-[protein] + ATP = O-phospho-L-threonyl-[protein] + ADP + H(+). This Arabidopsis thaliana (Mouse-ear cress) protein is LEAF RUST 10 DISEASE-RESISTANCE LOCUS RECEPTOR-LIKE PROTEIN KINASE-like 1.3.